A 61-amino-acid chain; its full sequence is Potassium channel toxin alpha-KTx 6.7 (61 aa).

An N-terminal signal peptide occupies residues Met1–Gly23. Disulfide bonds link Cys29–Cys50, Cys35–Cys55, Cys39–Cys57, and Cys45–Cys60. Cysteine amide is present on Cys60.

It belongs to the short scorpion toxin superfamily. Potassium channel inhibitor family. Alpha-KTx 06 subfamily. As to expression, expressed by the venom gland.

Its subcellular location is the secreted. Blocker of voltage-gated potassium channels. The sequence is that of Potassium channel toxin alpha-KTx 6.7 from Opistophthalmus carinatus (African yellow leg scorpion).